The sequence spans 387 residues: MVLATNSRCLAYHGPLLYEAKILMSYDPSKRGSKAKVEDGLPPTVEIGNVVNTHKRKRGPRASLPAAGATPDGDDSNDKNRHFSPKEGKPDVPADLADENEDKICYYVHYKGWKNTWDEWVGEERVLALNEDNIKLQKELKAAALAAAKKGKDFDALAPPEALSETASPAPTTKRKSMASKDSPAEGPRPVKRRGGLAALEDLEKEDDYLKRKEIALVVPDKLKAQLVDDWEFVTKDHQLVGLPRKVTVVDILKEFKKEAEAKYRPGSADADILNEVVSGIKLYFDRSLGSILLYRFEREQYLQITQSPDHSNKTMSEVYGAEHLLRLFVSLPGLIAMTNMDAQSVAVLKEHLEDFVRFLSTHQKTYFLKEAYTNASPAYEALSKGL.

The disordered stretch occupies residues 52–96 (NTHKRKRGPRASLPAAGATPDGDDSNDKNRHFSPKEGKPDVPADL). The segment covering 76-92 (SNDKNRHFSPKEGKPDV) has biased composition (basic and acidic residues). The region spanning 100 to 126 (NEDKICYYVHYKGWKNTWDEWVGEERV) is the Tudor-knot domain. The disordered stretch occupies residues 159-197 (PPEALSETASPAPTTKRKSMASKDSPAEGPRPVKRRGGL). The 175-residue stretch at 211-385 (KRKEIALVVP…ASPAYEALSK (175 aa)) folds into the MRG domain.

This sequence belongs to the MRG family. In terms of assembly, component of the NuA4 histone acetyltransferase complex.

Its subcellular location is the nucleus. In terms of biological role, involved in deacetylation of histones, chromatin assembly and chromosome segregation. May act as a transcriptional oscillator, directing histone deacetylases to specific chromosomal domains. Component of the NuA4 histone acetyltransferase complex which is involved in transcriptional activation of selected genes principally by acetylation of nucleosomal histone H4 and H2A. The NuA4 complex is also involved in DNA repair. This is Chromatin modification-related protein EAF3 (EAF3) from Yarrowia lipolytica (strain CLIB 122 / E 150) (Yeast).